Here is a 496-residue protein sequence, read N- to C-terminus: Ribose import ATP-binding protein RbsA (496 aa).

ABC transporter domains follow at residues 3-239 (IVME…VGRE) and 246-493 (ERTP…TGGN). 35-42 (GENGAGKS) contributes to the ATP binding site.

This sequence belongs to the ABC transporter superfamily. Ribose importer (TC 3.A.1.2.1) family. As to quaternary structure, the complex is composed of an ATP-binding protein (RbsA), two transmembrane proteins (RbsC) and a solute-binding protein (RbsB).

The protein localises to the cell membrane. It catalyses the reaction D-ribose(out) + ATP + H2O = D-ribose(in) + ADP + phosphate + H(+). Its function is as follows. Part of the ABC transporter complex RbsABC involved in ribose import. Responsible for energy coupling to the transport system. This is Ribose import ATP-binding protein RbsA from Oceanobacillus iheyensis (strain DSM 14371 / CIP 107618 / JCM 11309 / KCTC 3954 / HTE831).